The chain runs to 147 residues: MALKRINKELSDLARDPPAQCSAGPVGDDMFHWQATIMGPNDSPYQGGVFFLTIHFPTDYPFKPPKVAFTTRIYHPNINSNGSICLDILRSQWSPALTISKVLLSICSLLCDPNPDDPLVPEIARIYKTDRDKYNRISREWTQKYAM.

The region spanning 1-147 (MALKRINKEL…SREWTQKYAM (147 aa)) is the UBC core domain. Cysteine 21 and cysteine 107 form a disulfide bridge. The active-site Glycyl thioester intermediate is the cysteine 85.

Belongs to the ubiquitin-conjugating enzyme family. In terms of assembly, interacts with SCF (SKP1-CUL1-F-box protein) E3 ubiquitin ligase complex; when Cullin is neddylated, the interaction between the E2 and the SCF complex is strengthened. Interacts with DAPK3. Interacts with BRCA1; the DNA damage checkpoint promotes the association with BRCA1 after ionizing radiation. Interacts non-covalently with ubiquitin. Interacts with E3 ubiquitin-protein ligase CBLC. Interacts with UBTD1. Interacts with RIGI and RNF135; involved in RIGI ubiquitination and activation. In terms of processing, phosphorylated by AURKB.

It is found in the cell membrane. The protein localises to the endosome membrane. The catalysed reaction is S-ubiquitinyl-[E1 ubiquitin-activating enzyme]-L-cysteine + [E2 ubiquitin-conjugating enzyme]-L-cysteine = [E1 ubiquitin-activating enzyme]-L-cysteine + S-ubiquitinyl-[E2 ubiquitin-conjugating enzyme]-L-cysteine.. It catalyses the reaction S-ubiquitinyl-[E1 ubiquitin-activating enzyme]-L-cysteine + [acceptor protein]-L-lysine = [E1 ubiquitin-activating enzyme]-L-cysteine + N(6)-monoubiquitinyl-[acceptor protein]-L-lysine.. It functions in the pathway protein modification; protein ubiquitination. Functionally, accepts ubiquitin from the E1 complex and catalyzes its covalent attachment to other proteins. In vitro catalyzes 'Lys-11'-, as well as 'Lys-48'-linked polyubiquitination. Cooperates with the E2 CDC34 and the SCF(FBXW11) E3 ligase complex for the polyubiquitination of NFKBIA leading to its subsequent proteasomal degradation. Acts as an initiator E2, priming the phosphorylated NFKBIA target at positions 'Lys-21' and/or 'Lys-22' with a monoubiquitin. Ubiquitin chain elongation is then performed by CDC34, building ubiquitin chains from the UBE2D3-primed NFKBIA-linked ubiquitin. Also acts as an initiator E2, in conjunction with RNF8, for the priming of PCNA. Monoubiquitination of PCNA, and its subsequent polyubiquitination, are essential events in the operation of the DNA damage tolerance (DDT) pathway that is activated after DNA damage caused by UV or chemical agents during S-phase. Associates with the BRCA1/BARD1 E3 ligase complex to perform ubiquitination at DNA damage sites following ionizing radiation leading to DNA repair. Targets DAPK3 for ubiquitination which influences promyelocytic leukemia protein nuclear body (PML-NB) formation in the nucleus. In conjunction with the MDM2 and TOPORS E3 ligases, functions ubiquitination of p53/TP53. In conjunction with the CBL E3 ligase, targets EGFR for polyubiquitination at the plasma membrane as well as during its internalization and transport on endosomes. In conjunction with the STUB1 E3 quality control E3 ligase, ubiquitinates unfolded proteins to catalyze their immediate destruction. Together with RNF135, catalyzes the viral RNA-dependent 'Lys-63'-linked polyubiquitination of RIGI to activate the downstream signaling pathway that leads to interferon beta production. Together with ZNF598, catalyzes ubiquitination of 40S ribosomal proteins in response to ribosome collisions. In cooperation with the GATOR2 complex, catalyzes 'Lys-6'-linked ubiquitination of NPRL2. The polypeptide is Ubiquitin-conjugating enzyme E2 D3 (UBE2D3) (Homo sapiens (Human)).